Reading from the N-terminus, the 175-residue chain is uncharacterized protein (175 aa).

This is an uncharacterized protein from Acanthamoeba polyphaga mimivirus (APMV).